Here is a 297-residue protein sequence, read N- to C-terminus: NADH-ubiquinone oxidoreductase chain 1 (297 aa).

A run of 9 helical transmembrane segments spans residues 1 to 21 (MKSL…TLAE), 34 to 54 (PNHV…KLIL), 66 to 86 (WLFV…WLVI), 99 to 119 (LSIL…IYTG), 139 to 159 (VSYE…GATL), 170 to 190 (GTVL…AALA), 206 to 228 (LVAG…GEYA), 235 to 257 (TVLN…IWIR), and 277 to 297 (LPFL…LDLF).

The protein belongs to the complex I subunit 1 family.

The protein localises to the mitochondrion inner membrane. The enzyme catalyses a ubiquinone + NADH + 5 H(+)(in) = a ubiquinol + NAD(+) + 4 H(+)(out). Functionally, core subunit of the mitochondrial membrane respiratory chain NADH dehydrogenase (Complex I) that is believed to belong to the minimal assembly required for catalysis. Complex I functions in the transfer of electrons from NADH to the respiratory chain. The immediate electron acceptor for the enzyme is believed to be ubiquinone. The protein is NADH-ubiquinone oxidoreductase chain 1 of Hyaloraphidium curvatum (Lower fungus).